Reading from the N-terminus, the 648-residue chain is Chaperone protein DnaK (648 aa).

Thr-200 carries the phosphothreonine; by autocatalysis modification. Positions 612–631 are disordered; it reads QAGAAGAAGAAEGAAQGGAQ.

Belongs to the heat shock protein 70 family.

Acts as a chaperone. This is Chaperone protein DnaK from Burkholderia multivorans (strain ATCC 17616 / 249).